The sequence spans 378 residues: Succinyl-diaminopimelate desuccinylase (378 aa).

His68 lines the Zn(2+) pocket. Asp70 is a catalytic residue. Zn(2+) is bound at residue Asp101. Glu135 functions as the Proton acceptor in the catalytic mechanism. Glu136, Glu164, and His350 together coordinate Zn(2+).

Belongs to the peptidase M20A family. DapE subfamily. In terms of assembly, homodimer. Zn(2+) serves as cofactor. Co(2+) is required as a cofactor.

The catalysed reaction is N-succinyl-(2S,6S)-2,6-diaminopimelate + H2O = (2S,6S)-2,6-diaminopimelate + succinate. Its pathway is amino-acid biosynthesis; L-lysine biosynthesis via DAP pathway; LL-2,6-diaminopimelate from (S)-tetrahydrodipicolinate (succinylase route): step 3/3. Functionally, catalyzes the hydrolysis of N-succinyl-L,L-diaminopimelic acid (SDAP), forming succinate and LL-2,6-diaminopimelate (DAP), an intermediate involved in the bacterial biosynthesis of lysine and meso-diaminopimelic acid, an essential component of bacterial cell walls. This is Succinyl-diaminopimelate desuccinylase from Acinetobacter baumannii (strain ATCC 17978 / DSM 105126 / CIP 53.77 / LMG 1025 / NCDC KC755 / 5377).